The sequence spans 267 residues: Ribosomal RNA small subunit methyltransferase A (267 aa).

Asparagine 13, leucine 15, glycine 39, glutamate 59, aspartate 87, and asparagine 106 together coordinate S-adenosyl-L-methionine.

This sequence belongs to the class I-like SAM-binding methyltransferase superfamily. rRNA adenine N(6)-methyltransferase family. RsmA subfamily.

Its subcellular location is the cytoplasm. The catalysed reaction is adenosine(1518)/adenosine(1519) in 16S rRNA + 4 S-adenosyl-L-methionine = N(6)-dimethyladenosine(1518)/N(6)-dimethyladenosine(1519) in 16S rRNA + 4 S-adenosyl-L-homocysteine + 4 H(+). Specifically dimethylates two adjacent adenosines (A1518 and A1519) in the loop of a conserved hairpin near the 3'-end of 16S rRNA in the 30S particle. May play a critical role in biogenesis of 30S subunits. This is Ribosomal RNA small subunit methyltransferase A from Sulfurimonas denitrificans (strain ATCC 33889 / DSM 1251) (Thiomicrospira denitrificans (strain ATCC 33889 / DSM 1251)).